The primary structure comprises 177 residues: Bifunctional protein PyrR (177 aa).

Residues 101–113 (IILIDDVLYTGRT) carry the PRPP-binding motif.

This sequence belongs to the purine/pyrimidine phosphoribosyltransferase family. PyrR subfamily.

It catalyses the reaction UMP + diphosphate = 5-phospho-alpha-D-ribose 1-diphosphate + uracil. Functionally, regulates the transcription of the pyrimidine nucleotide (pyr) operon in response to exogenous pyrimidines. Also displays a weak uracil phosphoribosyltransferase activity which is not physiologically significant. The sequence is that of Bifunctional protein PyrR from Endomicrobium trichonymphae.